Reading from the N-terminus, the 607-residue chain is Elongation factor 4 (607 aa).

One can recognise a tr-type G domain in the interval 11–193; that stretch reads SKIRNFSIIA…QIVEKVPAPT (183 aa). GTP is bound by residues 23-28 and 140-143; these read DHGKST and NKID.

It belongs to the TRAFAC class translation factor GTPase superfamily. Classic translation factor GTPase family. LepA subfamily.

It localises to the cell membrane. It catalyses the reaction GTP + H2O = GDP + phosphate + H(+). In terms of biological role, required for accurate and efficient protein synthesis under certain stress conditions. May act as a fidelity factor of the translation reaction, by catalyzing a one-codon backward translocation of tRNAs on improperly translocated ribosomes. Back-translocation proceeds from a post-translocation (POST) complex to a pre-translocation (PRE) complex, thus giving elongation factor G a second chance to translocate the tRNAs correctly. Binds to ribosomes in a GTP-dependent manner. The polypeptide is Elongation factor 4 (Bacillus anthracis (strain CDC 684 / NRRL 3495)).